A 183-amino-acid chain; its full sequence is Ribosome rescue factor SmrB (183 aa).

The region spanning 98–173 (LDLHGLTQQQ…GDAALLVLIE (76 aa)) is the Smr domain.

The protein belongs to the SmrB family. As to quaternary structure, associates with collided ribosomes, but not with correctly translating polysomes.

Functionally, acts as a ribosome collision sensor. Detects stalled/collided disomes (pairs of ribosomes where the leading ribosome is stalled and a second ribosome has collided with it) and endonucleolytically cleaves mRNA at the 5' boundary of the stalled ribosome. Stalled/collided disomes form a new interface (primarily via the 30S subunits) that binds SmrB. Cleaved mRNA becomes available for tmRNA ligation, leading to ribosomal subunit dissociation and rescue of stalled ribosomes. This Klebsiella pneumoniae (strain 342) protein is Ribosome rescue factor SmrB.